Here is a 145-residue protein sequence, read N- to C-terminus: Protein MMF1, mitochondrial (145 aa).

The N-terminal 17 residues, 1 to 17 (MFLRNSVLRTAPVLRRG), are a transit peptide targeting the mitochondrion.

This sequence belongs to the RutC family.

It is found in the mitochondrion matrix. Functionally, plays a role in the maintenance of mitochondrial DNA. This Saccharomyces cerevisiae (strain ATCC 204508 / S288c) (Baker's yeast) protein is Protein MMF1, mitochondrial (MMF1).